We begin with the raw amino-acid sequence, 527 residues long: DNA polymerase epsilon subunit 2 (527 aa).

This sequence belongs to the DNA polymerase epsilon subunit B family. In terms of assembly, component of the DNA polymerase epsilon complex consisting of four subunits: the catalytic subunit POLE and the accessory subunits POLE2, POLE3 and POLE4.

The protein localises to the nucleus. Functionally, accessory component of the DNA polymerase epsilon complex. Participates in DNA repair and in chromosomal DNA replication. The sequence is that of DNA polymerase epsilon subunit 2 from Homo sapiens (Human).